A 698-amino-acid polypeptide reads, in one-letter code: Probable metal-nicotianamine transporter YSL17 (698 aa).

Residues 1 to 36 (MAEEARGGQRVVVDDDREDASSVASSTERAFEGEPL) are disordered. Transmembrane regions (helical) follow at residues 43–63 (VTARSAAVSGVLGAVVSVVAM), 67–87 (LTSGLLPSLGVPAGLLGFFLA), 114–134 (IAVVSCSTIAFSGGFGTYILG), 157–177 (IGRVIAFLFLVNFSGLFIIVP), 216–236 (VVTLFKSLGATVLWPIFQWFF), 277–297 (MITASMLAGSIVSWGILWPYI), 322–342 (VFVGVSMILADGLFTILSALV), 395–415 (WVAVASYAALAALSVVAVPLL), 424–444 (VAAAYVAAPVFAFCNAYGVGV), 463–483 (SWVGMDGGGVVAGLAACGIIV), 511–531 (VGQVAGTALGCVVNPAIFWVF), 567–587 (LPDHSVLLCKLFFAMALALSA), 607–627 (IGVAVAFFVPPRIPVGMAVGC), and 644–664 (LLLPAVASGLICGDGLGSLAS).

Belongs to the YSL (TC 2.A.67.2) family. As to expression, expressed at low levels in roots.

Its subcellular location is the membrane. May be involved in the transport of nicotianamine-chelated metals. This Oryza sativa subsp. japonica (Rice) protein is Probable metal-nicotianamine transporter YSL17 (YSL17).